The primary structure comprises 394 residues: Elongation factor Tu (394 aa).

The tr-type G domain occupies 10–204; that stretch reads KPHVNIGTIG…AVDSYIPQPV (195 aa). Positions 19-26 are G1; the sequence is GHVDHGKT. 19–26 contacts GTP; sequence GHVDHGKT. Thr26 contacts Mg(2+). A G2 region spans residues 60–64; it reads GITIS. The tract at residues 81–84 is G3; sequence DCPG. GTP contacts are provided by residues 81 to 85 and 136 to 139; these read DCPGH and NKID. Residues 136–139 form a G4 region; it reads NKID. Positions 174-176 are G5; it reads SAL.

The protein belongs to the TRAFAC class translation factor GTPase superfamily. Classic translation factor GTPase family. EF-Tu/EF-1A subfamily. Monomer.

The protein resides in the cytoplasm. The enzyme catalyses GTP + H2O = GDP + phosphate + H(+). GTP hydrolase that promotes the GTP-dependent binding of aminoacyl-tRNA to the A-site of ribosomes during protein biosynthesis. This Rickettsia peacockii (strain Rustic) protein is Elongation factor Tu.